A 201-amino-acid polypeptide reads, in one-letter code: GTP cyclohydrolase 1 (201 aa).

The Zn(2+) site is built by C90, H93, and C163.

This sequence belongs to the GTP cyclohydrolase I family. In terms of assembly, toroid-shaped homodecamer, composed of two pentamers of five dimers.

It catalyses the reaction GTP + H2O = 7,8-dihydroneopterin 3'-triphosphate + formate + H(+). Its pathway is cofactor biosynthesis; 7,8-dihydroneopterin triphosphate biosynthesis; 7,8-dihydroneopterin triphosphate from GTP: step 1/1. The polypeptide is GTP cyclohydrolase 1 (folE) (Streptomyces coelicolor (strain ATCC BAA-471 / A3(2) / M145)).